Reading from the N-terminus, the 184-residue chain is UPF0398 protein BCB4264_A1614 (184 aa).

This sequence belongs to the UPF0398 family.

This Bacillus cereus (strain B4264) protein is UPF0398 protein BCB4264_A1614.